Reading from the N-terminus, the 251-residue chain is Pyrroloquinoline-quinone synthase (251 aa).

Belongs to the PqqC family.

It catalyses the reaction 6-(2-amino-2-carboxyethyl)-7,8-dioxo-1,2,3,4,7,8-hexahydroquinoline-2,4-dicarboxylate + 3 O2 = pyrroloquinoline quinone + 2 H2O2 + 2 H2O + H(+). Its pathway is cofactor biosynthesis; pyrroloquinoline quinone biosynthesis. In terms of biological role, ring cyclization and eight-electron oxidation of 3a-(2-amino-2-carboxyethyl)-4,5-dioxo-4,5,6,7,8,9-hexahydroquinoline-7,9-dicarboxylic-acid to PQQ. In Pseudomonas savastanoi pv. phaseolicola (strain 1448A / Race 6) (Pseudomonas syringae pv. phaseolicola (strain 1448A / Race 6)), this protein is Pyrroloquinoline-quinone synthase.